Here is a 369-residue protein sequence, read N- to C-terminus: Nuclear pore complex-interacting protein family member A6 (369 aa).

The tract at residues serine 151–asparagine 170 is disordered.

This sequence belongs to the NPIP family.

This Homo sapiens (Human) protein is Nuclear pore complex-interacting protein family member A6.